We begin with the raw amino-acid sequence, 193 residues long: Probable GTP-binding protein EngB (193 aa).

Residues 24–193 (NIPEIALAGR…ELKAALAELL (170 aa)) enclose the EngB-type G domain. Residues 32–39 (GRSNVGKS), 59–63 (GKTRT), 77–80 (DLPG), 144–147 (TKAD), and 174–176 (FSA) each bind GTP. Positions 39 and 61 each coordinate Mg(2+).

The protein belongs to the TRAFAC class TrmE-Era-EngA-EngB-Septin-like GTPase superfamily. EngB GTPase family. Mg(2+) is required as a cofactor.

Its function is as follows. Necessary for normal cell division and for the maintenance of normal septation. The sequence is that of Probable GTP-binding protein EngB from Syntrophomonas wolfei subsp. wolfei (strain DSM 2245B / Goettingen).